The sequence spans 236 residues: Ribonuclease P protein component 3 (236 aa).

The protein belongs to the eukaryotic/archaeal RNase P protein component 3 family. In terms of assembly, consists of a catalytic RNA component and at least 4-5 protein subunits.

It localises to the cytoplasm. It carries out the reaction Endonucleolytic cleavage of RNA, removing 5'-extranucleotides from tRNA precursor.. In terms of biological role, part of ribonuclease P, a protein complex that generates mature tRNA molecules by cleaving their 5'-ends. This is Ribonuclease P protein component 3 from Natronomonas pharaonis (strain ATCC 35678 / DSM 2160 / CIP 103997 / JCM 8858 / NBRC 14720 / NCIMB 2260 / Gabara) (Halobacterium pharaonis).